Consider the following 181-residue polypeptide: CDP-diacylglycerol--glycerol-3-phosphate 3-phosphatidyltransferase (181 aa).

4 helical membrane-spanning segments follow: residues 8 to 28 (PNYL…TFYI), 35 to 55 (MLGA…GYIA), 64 to 84 (FGKM…IIML), and 148 to 168 (IIYL…LTII).

Belongs to the CDP-alcohol phosphatidyltransferase class-I family.

The protein localises to the cell membrane. The enzyme catalyses a CDP-1,2-diacyl-sn-glycerol + sn-glycerol 3-phosphate = a 1,2-diacyl-sn-glycero-3-phospho-(1'-sn-glycero-3'-phosphate) + CMP + H(+). Its pathway is phospholipid metabolism; phosphatidylglycerol biosynthesis; phosphatidylglycerol from CDP-diacylglycerol: step 1/2. In terms of biological role, this protein catalyzes the committed step to the synthesis of the acidic phospholipids. This Rickettsia bellii (strain RML369-C) protein is CDP-diacylglycerol--glycerol-3-phosphate 3-phosphatidyltransferase (pgsA).